Reading from the N-terminus, the 273-residue chain is Progestin and adipoQ receptor family member 4 (273 aa).

A run of 5 helical transmembrane segments spans residues 52 to 72, 79 to 99, 115 to 135, 185 to 205, and 245 to 265; these read IYTHGLALLGFLVLVPMTMPW, GWLGGTHCVACLVPPAASVLY, LLALDMCGVCLVNTLGALPII, LLVFGARGVGLGSGAPGSLPC, and LLSVGSILQLHAGVVPDLLWA.

Belongs to the ADIPOR family. Interacts with CERS2 and CERS5; the interaction regulates CERS2 and CERS5 stabilities and activities and is inhibited in presence of ceramides. In terms of tissue distribution, expressed in adipose tissue.

It localises to the golgi apparatus membrane. In terms of biological role, plays a role in maintaining adipose tissue function through the regulation of ceramide levels. Mediates the stability of ceramide synthetases, CERS2 and CERS5, and their activities. The protein is Progestin and adipoQ receptor family member 4 of Mus musculus (Mouse).